Reading from the N-terminus, the 339-residue chain is Basic membrane protein A (339 aa).

The signal sequence occupies residues 1 to 17 (MNKILLLILLESIVFLS). The N-palmitoyl cysteine moiety is linked to residue cysteine 18. Residue cysteine 18 is the site of S-diacylglycerol cysteine attachment.

This sequence belongs to the BMP lipoprotein family. In terms of assembly, monomer.

It is found in the cell inner membrane. Functionally, immunogenic protein. May be part of an ABC-type nucleoside uptake system involved in the purine salvage pathway. This chain is Basic membrane protein A (bmpA), found in Borreliella burgdorferi (strain ATCC 35210 / DSM 4680 / CIP 102532 / B31) (Borrelia burgdorferi).